A 254-amino-acid polypeptide reads, in one-letter code: Protein GltF (254 aa).

An N-terminal signal peptide occupies residues 1-25; the sequence is MFFKKNLTTAAICAALSVAAFSAMA. Residues 213-229 form a helical membrane-spanning segment; it reads PVAITAVTFPLLIDAAV.

To E.coli YhcF.

It localises to the cell membrane. Involved in induction of the so-called NTR enzymes in response to nitrogen deprivation, as well as in glutamate biosynthesis. May mediate the glutamate-dependent repression of the GLT operon. This chain is Protein GltF (gltF), found in Escherichia coli (strain K12).